Consider the following 398-residue polypeptide: G2/mitotic-specific cyclin-B2 (398 aa).

Disordered regions lie at residues 1 to 26 (MALLRRPTVSTDLENNDTGVNSKPKS) and 53 to 76 (AQNTKVPVPPTKTTNVNKHPKPTA). Thr-8 is subject to Phosphothreonine. Residues 8–23 (TVSTDLENNDTGVNSK) are compositionally biased toward polar residues. The span at 55–69 (NTKVPVPPTKTTNVN) shows a compositional bias: low complexity. A phosphoserine mark is found at Ser-77 and Ser-92. Thr-94 is modified (phosphothreonine). Ser-99, Ser-392, and Ser-398 each carry phosphoserine.

The protein belongs to the cyclin family. Cyclin AB subfamily. In terms of assembly, interacts with the CDK1 protein kinase to form a serine/threonine kinase holoenzyme complex also known as maturation promoting factor (MPF). The cyclin subunit imparts substrate specificity to the complex.

In terms of biological role, essential for the control of the cell cycle at the G2/M (mitosis) transition. This Bos taurus (Bovine) protein is G2/mitotic-specific cyclin-B2 (CCNB2).